Here is an 86-residue protein sequence, read N- to C-terminus: Small ribosomal subunit protein bS18 (86 aa).

It belongs to the bacterial ribosomal protein bS18 family. In terms of assembly, part of the 30S ribosomal subunit. Forms a tight heterodimer with protein bS6.

Its function is as follows. Binds as a heterodimer with protein bS6 to the central domain of the 16S rRNA, where it helps stabilize the platform of the 30S subunit. This is Small ribosomal subunit protein bS18 from Campylobacter concisus (strain 13826).